Reading from the N-terminus, the 381-residue chain is Neuropeptide Y receptor type 2 (381 aa).

Residues 1–35 form a disordered region; that stretch reads MGPIGAEADENQTVEEMKVEQYGPQTTPRGELVPD. The Extracellular segment spans residues 1–51; sequence MGPIGAEADENQTVEEMKVEQYGPQTTPRGELVPDPEPELIDSTKLIEVQV. The N-linked (GlcNAc...) asparagine glycan is linked to N11. The chain crosses the membrane as a helical span at residues 52 to 72; that stretch reads VLILAYCSIILLGVIGNSLVI. The Cytoplasmic segment spans residues 73 to 86; it reads HVVIKFKSMRTVTN. The helical transmembrane segment at 87-107 threads the bilayer; that stretch reads FFIANLAVADLLVNTLCLPFT. Residues 108–124 lie on the Extracellular side of the membrane; sequence LTYTLMGEWKMGPVLCH. C123 and C203 are disulfide-bonded. A helical transmembrane segment spans residues 125-145; sequence LVPYAQGLAVQVSTITLTVIA. At 146–165 the chain is on the cytoplasmic side; it reads LDRHRCIVYHLESKISKRIS. A helical membrane pass occupies residues 166–186; that stretch reads FLIIGLAWGISALLASPLAIF. At 187 to 216 the chain is on the extracellular side; that stretch reads REYSLIEIIPDFEIVACTEKWPGEEKSIYG. The helical transmembrane segment at 217-237 threads the bilayer; that stretch reads TVYSLSSLLILYVLPLGIISF. The Cytoplasmic portion of the chain corresponds to 238-268; that stretch reads SYTRIWSKLKNHVSPGAANDHYHQRRQKTTK. A helical transmembrane segment spans residues 269 to 289; it reads MLVCVVVVFAVSWLPLHAFQL. Residues 290–304 are Extracellular-facing; sequence AVDIDSQVLDLKEYK. Residues 305-325 traverse the membrane as a helical segment; it reads LIFTVFHIIAMCSTFANPLLY. At 326–381 the chain is on the cytoplasmic side; the sequence is GWMNSNYRKAFLSAFRCEQRLDAIHSEVSVTFKAKKNLEVRKNSGPNDSFTEATNV. C342 carries S-palmitoyl cysteine lipidation.

The protein belongs to the G-protein coupled receptor 1 family. As to expression, high levels in amygdala, corpus callosum, hippocampus and subthalamic nucleus. Also detectable in caudate nucleus, hypothalamus and substantia nigra.

Its subcellular location is the cell membrane. Functionally, receptor for neuropeptide Y and peptide YY. The rank order of affinity of this receptor for pancreatic polypeptides is PYY &gt; NPY &gt; PYY (3-36) &gt; NPY (2-36) &gt; [Ile-31, Gln-34] PP &gt; [Leu-31, Pro-34] NPY &gt; PP, [Pro-34] PYY and NPY free acid. The sequence is that of Neuropeptide Y receptor type 2 (NPY2R) from Homo sapiens (Human).